Consider the following 270-residue polypeptide: Monofunctional glycosyltransferase (270 aa).

Positions 1–10 (MKRSQRMNNS) are enriched in polar residues. Residues 1–36 (MKRSQRMNNSPERHSQYRNEPHYNTYYQPVGKPPKK) form a disordered region. The span at 11-21 (PERHSQYRNEP) shows a compositional bias: basic and acidic residues. The chain crosses the membrane as a helical span at residues 42-62 (IFLRLFIIFVFIYALFIGLMY).

It belongs to the glycosyltransferase 51 family.

It localises to the cell membrane. The enzyme catalyses [GlcNAc-(1-&gt;4)-Mur2Ac(oyl-L-Ala-gamma-D-Glu-L-Lys-D-Ala-D-Ala)](n)-di-trans,octa-cis-undecaprenyl diphosphate + beta-D-GlcNAc-(1-&gt;4)-Mur2Ac(oyl-L-Ala-gamma-D-Glu-L-Lys-D-Ala-D-Ala)-di-trans,octa-cis-undecaprenyl diphosphate = [GlcNAc-(1-&gt;4)-Mur2Ac(oyl-L-Ala-gamma-D-Glu-L-Lys-D-Ala-D-Ala)](n+1)-di-trans,octa-cis-undecaprenyl diphosphate + di-trans,octa-cis-undecaprenyl diphosphate + H(+). It participates in cell wall biogenesis; peptidoglycan biosynthesis. Peptidoglycan polymerase that catalyzes glycan chain elongation using lipid-linked disaccharide-pentapeptide as the substrate. The protein is Monofunctional glycosyltransferase of Staphylococcus haemolyticus (strain JCSC1435).